The primary structure comprises 98 residues: Large ribosomal subunit protein uL23 (98 aa).

This sequence belongs to the universal ribosomal protein uL23 family. In terms of assembly, part of the 50S ribosomal subunit. Contacts protein L29, and trigger factor when it is bound to the ribosome.

Functionally, one of the early assembly proteins it binds 23S rRNA. One of the proteins that surrounds the polypeptide exit tunnel on the outside of the ribosome. Forms the main docking site for trigger factor binding to the ribosome. The protein is Large ribosomal subunit protein uL23 of Marinomonas sp. (strain MWYL1).